Here is a 254-residue protein sequence, read N- to C-terminus: 3-deoxy-manno-octulosonate cytidylyltransferase (254 aa).

This sequence belongs to the KdsB family.

It localises to the cytoplasm. The enzyme catalyses 3-deoxy-alpha-D-manno-oct-2-ulosonate + CTP = CMP-3-deoxy-beta-D-manno-octulosonate + diphosphate. It participates in nucleotide-sugar biosynthesis; CMP-3-deoxy-D-manno-octulosonate biosynthesis; CMP-3-deoxy-D-manno-octulosonate from 3-deoxy-D-manno-octulosonate and CTP: step 1/1. Its pathway is bacterial outer membrane biogenesis; lipopolysaccharide biosynthesis. Its function is as follows. Activates KDO (a required 8-carbon sugar) for incorporation into bacterial lipopolysaccharide in Gram-negative bacteria. This is 3-deoxy-manno-octulosonate cytidylyltransferase from Pseudomonas fluorescens (strain SBW25).